Here is a 278-residue protein sequence, read N- to C-terminus: Large ribosomal subunit protein uL2 (278 aa).

The tract at residues Ala208–Lys278 is disordered. Residues Gly209 to Gln219 are compositionally biased toward basic residues. Positions Lys258 to Ile270 are enriched in basic and acidic residues.

It belongs to the universal ribosomal protein uL2 family. As to quaternary structure, part of the 50S ribosomal subunit. Forms a bridge to the 30S subunit in the 70S ribosome.

Its function is as follows. One of the primary rRNA binding proteins. Required for association of the 30S and 50S subunits to form the 70S ribosome, for tRNA binding and peptide bond formation. It has been suggested to have peptidyltransferase activity; this is somewhat controversial. Makes several contacts with the 16S rRNA in the 70S ribosome. The protein is Large ribosomal subunit protein uL2 of Lactobacillus delbrueckii subsp. bulgaricus (strain ATCC 11842 / DSM 20081 / BCRC 10696 / JCM 1002 / NBRC 13953 / NCIMB 11778 / NCTC 12712 / WDCM 00102 / Lb 14).